The primary structure comprises 253 residues: Putative B3 domain-containing protein Os03g0619850 (253 aa).

Positions 26 to 119 (MSCFLIRMTT…CFEVMILDSD (94 aa)) form a DNA-binding region, TF-B3. Disordered stretches follow at residues 126–150 (LKSN…AGPP) and 230–253 (HRDA…EQDS). Over residues 230 to 239 (HRDADQERQM) the composition is skewed to basic and acidic residues.

It is found in the nucleus. The chain is Putative B3 domain-containing protein Os03g0619850 from Oryza sativa subsp. japonica (Rice).